The following is a 154-amino-acid chain: Myoglobin (154 aa).

In terms of domain architecture, Globin spans 2–148; it reads GLSDEEWKKV…FRNDMASRYK (147 aa). A nitrite-binding site is contributed by His-65. O2 is bound at residue His-65. Residue His-94 coordinates heme b.

The protein belongs to the globin family. As to quaternary structure, monomeric.

Its subcellular location is the cytoplasm. The protein resides in the sarcoplasm. The enzyme catalyses Fe(III)-heme b-[protein] + nitric oxide + H2O = Fe(II)-heme b-[protein] + nitrite + 2 H(+). It carries out the reaction H2O2 + AH2 = A + 2 H2O. Monomeric heme protein which primary function is to store oxygen and facilitate its diffusion within muscle tissues. Reversibly binds oxygen through a pentacoordinated heme iron and enables its timely and efficient release as needed during periods of heightened demand. Depending on the oxidative conditions of tissues and cells, and in addition to its ability to bind oxygen, it also has a nitrite reductase activity whereby it regulates the production of bioactive nitric oxide. Under stress conditions, like hypoxia and anoxia, it also protects cells against reactive oxygen species thanks to its pseudoperoxidase activity. In Varanus varius (Lace monitor lizard), this protein is Myoglobin (MB).